Here is a 591-residue protein sequence, read N- to C-terminus: V-type ATP synthase alpha chain (591 aa).

242 to 249 (GPFGAGKT) lines the ATP pocket.

It belongs to the ATPase alpha/beta chains family.

The enzyme catalyses ATP + H2O + 4 H(+)(in) = ADP + phosphate + 5 H(+)(out). Its function is as follows. Produces ATP from ADP in the presence of a proton gradient across the membrane. The V-type alpha chain is a catalytic subunit. This is V-type ATP synthase alpha chain from Chlamydia trachomatis serovar L2 (strain ATCC VR-902B / DSM 19102 / 434/Bu).